A 213-amino-acid chain; its full sequence is Putative tRNA methyltransferase MPN_351 (213 aa).

Belongs to the TrmK family.

The protein resides in the cytoplasm. The chain is Putative tRNA methyltransferase MPN_351 from Mycoplasma pneumoniae (strain ATCC 29342 / M129 / Subtype 1) (Mycoplasmoides pneumoniae).